The sequence spans 520 residues: D-aminopeptidase (520 aa).

Catalysis depends on Ser62, which acts as the Nucleophile. Residue Lys65 is the Proton donor/acceptor of the active site. The interval 477 to 487 (QRSMDAPSPGE) is important for specificity. Residue Asp481 participates in substrate binding.

The protein belongs to the peptidase S12 family. In terms of assembly, homodimer.

The catalysed reaction is Release of an N-terminal D-amino acid from a peptide, Xaa-|-Yaa-, in which Xaa is preferably D-Ala, D-Ser or D-Thr. D-amino acid amides and methyl esters also are hydrolyzed, as is glycine amide.. Inhibited by beta-lactam compounds such as 6-aminopenicillic acid, 7-aminocephalosporanic acid, benzylpenicillin and ampicillin. Inhibited by p-chloromercuribenzoate. Functionally, hydrolyzes N-terminal residues in D-amino acid-containing peptides. The polypeptide is D-aminopeptidase (Brucella anthropi (strain ATCC 49188 / DSM 6882 / CCUG 24695 / JCM 21032 / LMG 3331 / NBRC 15819 / NCTC 12168 / Alc 37) (Ochrobactrum anthropi)).